A 354-amino-acid polypeptide reads, in one-letter code: Histidinol-phosphate aminotransferase (354 aa).

Lysine 215 carries the post-translational modification N6-(pyridoxal phosphate)lysine.

It belongs to the class-II pyridoxal-phosphate-dependent aminotransferase family. Histidinol-phosphate aminotransferase subfamily. Homodimer. Pyridoxal 5'-phosphate serves as cofactor.

It carries out the reaction L-histidinol phosphate + 2-oxoglutarate = 3-(imidazol-4-yl)-2-oxopropyl phosphate + L-glutamate. The protein operates within amino-acid biosynthesis; L-histidine biosynthesis; L-histidine from 5-phospho-alpha-D-ribose 1-diphosphate: step 7/9. This Vesicomyosocius okutanii subsp. Calyptogena okutanii (strain HA) protein is Histidinol-phosphate aminotransferase.